The chain runs to 231 residues: Endonuclease NucS (231 aa).

The protein belongs to the NucS endonuclease family.

It localises to the cytoplasm. In terms of biological role, cleaves both 3' and 5' ssDNA extremities of branched DNA structures. This is Endonuclease NucS from Pseudarthrobacter chlorophenolicus (strain ATCC 700700 / DSM 12829 / CIP 107037 / JCM 12360 / KCTC 9906 / NCIMB 13794 / A6) (Arthrobacter chlorophenolicus).